The sequence spans 20 residues: Thrombin-like enzyme Cdc SII (20 aa).

Belongs to the peptidase S1 family. Snake venom subfamily. Monomer. As to expression, expressed by the venom gland.

The protein localises to the secreted. Its activity is regulated as follows. Strongly inhibited by PMSF and moderately inhibited by leupeptin. Not inhibited by EDTA, aprotinin, pepstatin, and bestatin. Functionally, thrombin-like snake venom serine protease that coagulates human plasma and bovine fibrinogen by hydrolysis of the alpha chains (FGA) (minimum coagulation dose is 60 ug on fibrinogen). Has fibrinogenolytic activities, and degrades preferentially the Aalpha chain (FGA). Shows amidolytic activity toward N-benzoyl-L-Arg-p-nitroanilide, has a higher activity than Cdc SI. In vivo, intravenous injection induces defibrin(ogen)ation and a loss of the righting reflex and opisthotoxins, together with a typical gyroxin-like effect (18-20 minutes). Subcutaneous injection into the footpads induces moderate edema. Potentiates local hemorrhagic activity induced by metalloproteinases (BaP1). The chain is Thrombin-like enzyme Cdc SII from Crotalus durissus cumanensis (South American rattlesnake).